A 337-amino-acid polypeptide reads, in one-letter code: Phenylalanine--tRNA ligase alpha subunit (337 aa).

Mg(2+) is bound at residue Glu-258.

This sequence belongs to the class-II aminoacyl-tRNA synthetase family. Phe-tRNA synthetase alpha subunit type 1 subfamily. As to quaternary structure, tetramer of two alpha and two beta subunits. Mg(2+) is required as a cofactor.

It is found in the cytoplasm. The catalysed reaction is tRNA(Phe) + L-phenylalanine + ATP = L-phenylalanyl-tRNA(Phe) + AMP + diphosphate + H(+). The chain is Phenylalanine--tRNA ligase alpha subunit from Burkholderia thailandensis (strain ATCC 700388 / DSM 13276 / CCUG 48851 / CIP 106301 / E264).